We begin with the raw amino-acid sequence, 376 residues long: Protein RecA (376 aa).

78 to 85 (GPESSGKT) provides a ligand contact to ATP. Positions 355 to 376 (PVELVPNVDFDDEADTEADAED) are disordered. Over residues 363–376 (DFDDEADTEADAED) the composition is skewed to acidic residues.

The protein belongs to the RecA family.

It is found in the cytoplasm. Can catalyze the hydrolysis of ATP in the presence of single-stranded DNA, the ATP-dependent uptake of single-stranded DNA by duplex DNA, and the ATP-dependent hybridization of homologous single-stranded DNAs. It interacts with LexA causing its activation and leading to its autocatalytic cleavage. This is Protein RecA from Corynebacterium glutamicum (strain R).